We begin with the raw amino-acid sequence, 118 residues long: Appetite-regulating hormone (118 aa).

A signal peptide spans 1–24 (MPSTGTICSLLLLSVLLMADLAMA). Residue Ser27 is the site of O-decanoyl serine; alternate attachment. Ser27 is lipidated: O-hexanoyl serine; alternate. The O-octanoyl serine; alternate moiety is linked to residue Ser27. The tract at residues 29–50 (LSPEHQKVQQRKESKKPAAKLK) is disordered. Over residues 32-44 (EHQKVQQRKESKK) the composition is skewed to basic and acidic residues. Positions 53–76 (ALEGWLGPEDSGEVEGTEDKLEIR) are cleaved as a propeptide — removed in mature form. Leu99 carries the post-translational modification Leucine amide. Positions 100-118 (GKFLQDILWEEVTEAPADK) are cleaved as a propeptide — removed in mature form.

This sequence belongs to the motilin family. O-octanoylated by GOAT/MBOAT4. O-octanoylation is essential for ghrelin activity. In terms of processing, amidation of Leu-99 is essential for obestatin activity.

It localises to the secreted. Its function is as follows. Ghrelin is the ligand for growth hormone secretagogue receptor type 1 (GHSR). Induces the release of growth hormone from the pituitary. Has an appetite-stimulating effect, induces adiposity and stimulates gastric acid secretion. Involved in growth regulation. Functionally, obestatin may be the ligand for GPR39. May have an appetite-reducing effect resulting in decreased food intake. May reduce gastric emptying activity and jejunal motility. This chain is Appetite-regulating hormone (GHRL), found in Sus scrofa (Pig).